A 77-amino-acid polypeptide reads, in one-letter code: Putative neurotoxin 3 (77 aa).

Residues 1-25 form the signal peptide; it reads MKAFIAILSIAIVLLLIVSIKETSA. Residues 26–46 constitute a propeptide that is removed on maturation; that stretch reads KDCKQECVKRYTNGDLTNFLK.

The protein belongs to the scolopendra neurotoxin 3 family. In terms of processing, contains 2 disulfide bonds. Expressed by the venom gland.

Its subcellular location is the secreted. This chain is Putative neurotoxin 3, found in Scolopendra mutilans (Chinese red-headed centipede).